Here is a 194-residue protein sequence, read N- to C-terminus: UPF0215 protein TV0037 (194 aa).

Belongs to the UPF0215 family.

This chain is UPF0215 protein TV0037, found in Thermoplasma volcanium (strain ATCC 51530 / DSM 4299 / JCM 9571 / NBRC 15438 / GSS1).